Consider the following 153-residue polypeptide: MESWIFLGLILLIAYLGKNSSLLIAGAVVIVIKLFPFLSQKLYPVIQAKGINWGVTIISVAILIPIATGQIQFKDLINAMKTPAGWIAVVCGILVAILSKHGVNLLSSTPQVTVALVIGTIIGVVFLKGVAAGPVIAAGITYYLVTLLNLSFS.

5 helical membrane passes run tryptophan 4–isoleucine 24, glycine 26–isoleucine 46, isoleucine 51–isoleucine 71, tryptophan 86–leucine 106, and leucine 116–isoleucine 136.

Belongs to the UPF0756 family.

It is found in the cell membrane. This Ligilactobacillus salivarius (strain UCC118) (Lactobacillus salivarius) protein is UPF0756 membrane protein LSL_0936.